Consider the following 462-residue polypeptide: MDINKVTAVYFVGAGGIGMSALIRYFLAKGKRVGGYDKTPSDLTEELKKEGADIHYEDNVALIGEAFKSPDDTLVVYTPAVPESHTELTYFRAHGFEVMKRARVLGEITKSSRGLCVAGTHGKTTTSSMLAHLLKQSPVDCNAFLGGILKNYESNLMLSDTSDFTVIEADEFDRSFHWLTPYMAVITSADPDHLDIYGTAEAYRESFEKFTSLIRPDGCLLIKKGINVTPRLQEGVKKYTYSVTEIADFYAENIRICDGNITFDFVGPEIRIPDVELGVPVKVNIENGVAAMAIAWLNGVKPEDLKKGMATFAGPRRRFDFHLKTDQVVLIDDYAHHPAELRQSILSVKELYAGRKVTGIFQPHLYTRTRDFAGDFAASLSLLDELILLDIYPAREEPIPGVSSRIIFDKVTIPSKTLCKKEELLDVVAAGKYEVVLMVGAGNIDRLVEPVKEILCKQIRKP.

119–125 (GTHGKTT) provides a ligand contact to ATP.

This sequence belongs to the MurCDEF family.

The protein resides in the cytoplasm. It carries out the reaction UDP-N-acetyl-alpha-D-muramate + L-alanine + ATP = UDP-N-acetyl-alpha-D-muramoyl-L-alanine + ADP + phosphate + H(+). Its pathway is cell wall biogenesis; peptidoglycan biosynthesis. Cell wall formation. The sequence is that of UDP-N-acetylmuramate--L-alanine ligase from Parabacteroides distasonis (strain ATCC 8503 / DSM 20701 / CIP 104284 / JCM 5825 / NCTC 11152).